The primary structure comprises 585 residues: BURP domain-containing protein 17 (585 aa).

A signal peptide spans 1–20 (MDRIFARFFCFLLIAAVSHA). The interval 63 to 82 (GQRNYKSSVSHVAERSHRVD) is disordered. A BURP domain is found at 363–584 (FFLEKNLQQG…QPDAVVWTRR (222 aa)).

In terms of tissue distribution, expressed in leaves.

This chain is BURP domain-containing protein 17 (BURP17), found in Oryza sativa subsp. japonica (Rice).